The primary structure comprises 274 residues: Diaminopimelate epimerase (274 aa).

Residues N11, Q44, and N64 each coordinate substrate. Catalysis depends on C73, which acts as the Proton donor. Residues 74–75, N157, N190, and 208–209 contribute to the substrate site; these read GN and ER. C217 acts as the Proton acceptor in catalysis. 218-219 serves as a coordination point for substrate; sequence GS.

The protein belongs to the diaminopimelate epimerase family. As to quaternary structure, homodimer.

The protein localises to the cytoplasm. The enzyme catalyses (2S,6S)-2,6-diaminopimelate = meso-2,6-diaminopimelate. It participates in amino-acid biosynthesis; L-lysine biosynthesis via DAP pathway; DL-2,6-diaminopimelate from LL-2,6-diaminopimelate: step 1/1. Its function is as follows. Catalyzes the stereoinversion of LL-2,6-diaminopimelate (L,L-DAP) to meso-diaminopimelate (meso-DAP), a precursor of L-lysine and an essential component of the bacterial peptidoglycan. This is Diaminopimelate epimerase from Shigella flexneri serotype 5b (strain 8401).